We begin with the raw amino-acid sequence, 147 residues long: 3-dehydroquinate dehydratase (147 aa).

The active-site Proton acceptor is the tyrosine 24. The substrate site is built by asparagine 73, histidine 79, and aspartate 86. Histidine 99 functions as the Proton donor in the catalytic mechanism. Substrate-binding positions include 100 to 101 (LS) and arginine 110.

Belongs to the type-II 3-dehydroquinase family. As to quaternary structure, homododecamer.

It carries out the reaction 3-dehydroquinate = 3-dehydroshikimate + H2O. It participates in metabolic intermediate biosynthesis; chorismate biosynthesis; chorismate from D-erythrose 4-phosphate and phosphoenolpyruvate: step 3/7. Functionally, catalyzes a trans-dehydration via an enolate intermediate. In Hyphomonas neptunium (strain ATCC 15444), this protein is 3-dehydroquinate dehydratase.